We begin with the raw amino-acid sequence, 318 residues long: Transaldolase (318 aa).

The active-site Schiff-base intermediate with substrate is lysine 132.

Belongs to the transaldolase family. Type 1 subfamily. Homodimer.

It is found in the cytoplasm. It carries out the reaction D-sedoheptulose 7-phosphate + D-glyceraldehyde 3-phosphate = D-erythrose 4-phosphate + beta-D-fructose 6-phosphate. It participates in carbohydrate degradation; pentose phosphate pathway; D-glyceraldehyde 3-phosphate and beta-D-fructose 6-phosphate from D-ribose 5-phosphate and D-xylulose 5-phosphate (non-oxidative stage): step 2/3. Transaldolase is important for the balance of metabolites in the pentose-phosphate pathway. This Shewanella oneidensis (strain ATCC 700550 / JCM 31522 / CIP 106686 / LMG 19005 / NCIMB 14063 / MR-1) protein is Transaldolase.